Reading from the N-terminus, the 198-residue chain is Chitin synthase 2 (198 aa).

The protein belongs to the chitin synthase family. Class III subfamily.

Its subcellular location is the cell membrane. The catalysed reaction is [(1-&gt;4)-N-acetyl-beta-D-glucosaminyl](n) + UDP-N-acetyl-alpha-D-glucosamine = [(1-&gt;4)-N-acetyl-beta-D-glucosaminyl](n+1) + UDP + H(+). Its function is as follows. Polymerizes chitin, a structural polymer of the cell wall and septum, by transferring the sugar moiety of UDP-GlcNAc to the non-reducing end of the growing chitin polymer. In Rhinocladiella atrovirens, this protein is Chitin synthase 2 (CHS2).